The sequence spans 88 residues: Small ribosomal subunit protein uS15 (88 aa).

It belongs to the universal ribosomal protein uS15 family. In terms of assembly, part of the 30S ribosomal subunit. Forms a bridge to the 50S subunit in the 70S ribosome, contacting the 23S rRNA.

Functionally, one of the primary rRNA binding proteins, it binds directly to 16S rRNA where it helps nucleate assembly of the platform of the 30S subunit by binding and bridging several RNA helices of the 16S rRNA. Forms an intersubunit bridge (bridge B4) with the 23S rRNA of the 50S subunit in the ribosome. This is Small ribosomal subunit protein uS15 from Desulfitobacterium hafniense (strain Y51).